The chain runs to 175 residues: Adenine phosphoribosyltransferase (175 aa).

This sequence belongs to the purine/pyrimidine phosphoribosyltransferase family. Homodimer.

The protein resides in the cytoplasm. The enzyme catalyses AMP + diphosphate = 5-phospho-alpha-D-ribose 1-diphosphate + adenine. The protein operates within purine metabolism; AMP biosynthesis via salvage pathway; AMP from adenine: step 1/1. Its function is as follows. Catalyzes a salvage reaction resulting in the formation of AMP, that is energically less costly than de novo synthesis. In Clavibacter michiganensis subsp. michiganensis (strain NCPPB 382), this protein is Adenine phosphoribosyltransferase.